Consider the following 734-residue polypeptide: Photosystem I P700 chlorophyll a apoprotein A2 (734 aa).

Transmembrane regions (helical) follow at residues 46 to 69 (IFAS…FHVA), 135 to 158 (LYTG…LHLQ), 175 to 199 (LNHH…HVAI), 273 to 291 (MAHH…GHMY), 330 to 353 (LHFQ…QHMY), 369 to 395 (AALY…IFFI), 417 to 439 (AIIS…LYVH), and 517 to 535 (FLVH…LILV). [4Fe-4S] cluster is bound by residues cysteine 559 and cysteine 568. Transmembrane regions (helical) follow at residues 575 to 596 (AFYL…YWHW) and 643 to 665 (LSVW…MFLI). The chlorophyll a site is built by histidine 654, methionine 662, and tyrosine 670. Tryptophan 671 lines the phylloquinone pocket. A helical transmembrane segment spans residues 707 to 727 (LVGLAHFSVGYIFTYAAFLIA).

The protein belongs to the PsaA/PsaB family. The PsaA/B heterodimer binds the P700 chlorophyll special pair and subsequent electron acceptors. PSI consists of a core antenna complex that captures photons, and an electron transfer chain that converts photonic excitation into a charge separation. The eukaryotic PSI reaction center is composed of at least 11 subunits. P700 is a chlorophyll a/chlorophyll a' dimer, A0 is one or more chlorophyll a, A1 is one or both phylloquinones and FX is a shared 4Fe-4S iron-sulfur center. serves as cofactor.

The protein localises to the plastid. It is found in the chloroplast thylakoid membrane. The catalysed reaction is reduced [plastocyanin] + hnu + oxidized [2Fe-2S]-[ferredoxin] = oxidized [plastocyanin] + reduced [2Fe-2S]-[ferredoxin]. Functionally, psaA and PsaB bind P700, the primary electron donor of photosystem I (PSI), as well as the electron acceptors A0, A1 and FX. PSI is a plastocyanin-ferredoxin oxidoreductase, converting photonic excitation into a charge separation, which transfers an electron from the donor P700 chlorophyll pair to the spectroscopically characterized acceptors A0, A1, FX, FA and FB in turn. Oxidized P700 is reduced on the lumenal side of the thylakoid membrane by plastocyanin. In Solanum tuberosum (Potato), this protein is Photosystem I P700 chlorophyll a apoprotein A2.